The chain runs to 366 residues: Proline-rich protein 19 (366 aa).

Disordered stretches follow at residues 1–53 (MDPR…RDPC), 102–149 (ESHT…DLPV), 256–286 (TPAH…AAWG), and 301–338 (ATPP…WSPN). The segment covering 18 to 29 (GRIRRRKTRRER) has biased composition (basic residues). 2 stretches are compositionally biased toward polar residues: residues 104-113 (HTPQLPTKPS) and 256-265 (TPAHRGSQVQ). Residues 275-286 (SSASSPSGAAWG) show a composition bias toward low complexity. The span at 302–326 (TPPPPPPQPWDVRPPQPLPQPPSPL) shows a compositional bias: pro residues.

Interacts with CNTD1. Preferentially expressed in gonads.

Its subcellular location is the nucleus. It localises to the chromosome. In terms of biological role, promotes meiotic crossing over formation through its interaction with CNTD1 by participating in the crossover differentiation step of crossover-specific recombination intermediates. The polypeptide is Proline-rich protein 19 (Mus musculus (Mouse)).